A 212-amino-acid polypeptide reads, in one-letter code: Cytidylate kinase (212 aa).

7 to 15 (GPAASGKGT) is an ATP binding site.

This sequence belongs to the cytidylate kinase family. Type 1 subfamily.

It localises to the cytoplasm. The catalysed reaction is CMP + ATP = CDP + ADP. It catalyses the reaction dCMP + ATP = dCDP + ADP. This Rhodopseudomonas palustris (strain TIE-1) protein is Cytidylate kinase.